A 580-amino-acid chain; its full sequence is Arginine--tRNA ligase (580 aa).

The 'HIGH' region motif lies at 131–141 (ANPTGPLHVGH).

It belongs to the class-I aminoacyl-tRNA synthetase family. As to quaternary structure, monomer.

The protein localises to the cytoplasm. The enzyme catalyses tRNA(Arg) + L-arginine + ATP = L-arginyl-tRNA(Arg) + AMP + diphosphate. The polypeptide is Arginine--tRNA ligase (Ruegeria sp. (strain TM1040) (Silicibacter sp.)).